Consider the following 499-residue polypeptide: MARCRRRSGCTAGAALLLLLALALSGGGGAAPQGAEVTGLPGFDGALPSKHYAGYVTVDEGHGRNLFYYVVESERDPGKDPVVLWLNGGPGCSSFDGFVYEHGPFNFESGGSVKSLPKLHLNPYAWSKVSTMIYLDSPAGVGLSYSKNVSDYETGDLKTATDSHTFLLKWFQLYPEFLSNPFYIAGESYAGVYVPTLSHEVVKGIQGGAKPTINFKGYMVGNGVCDTIFDGNALVPFAHGMGLISDEIYQQASTSCHGNYWNATDGKCDTAISKIESLISGLNIYDILEPCYHSRSIKEVNLQNSKLPQSFKDLGTTNKPFPVRTRMLGRAWPLRAPVKAGRVPSWQEVASGVPCMSDEVATAWLDNAAVRSAIHAQSVSAIGPWLLCTDKLYFVHDAGSMIAYHKNLTSQGYRAIIFSGDHDMCVPFTGSEAWTKSLGYGVVDSWRPWITNGQVSGYTEGYEHGLTFATIKGAGHTVPEYKPQEAFAFYSRWLAGSKL.

Residues Met-1 to Ala-30 form the signal peptide. Disulfide bonds link Cys-92-Cys-388, Cys-256-Cys-268, and Cys-291-Cys-355. A glycan (N-linked (GlcNAc...) asparagine) is linked at Asn-148. The active site involves Ser-188. Asn-262 is a glycosylation site (N-linked (GlcNAc...) asparagine). The propeptide at Ile-297 to Ser-351 is linker peptide. An N-linked (GlcNAc...) asparagine glycan is attached at Asn-407. Residues Asp-423 and His-476 contribute to the active site. The Microbody targeting signal motif lies at Ser-497 to Leu-499.

It belongs to the peptidase S10 family. In terms of assembly, carboxypeptidase I is a dimer, where each monomer is composed of two chains linked by disulfide bonds. Post-translationally, the linker peptide is endoproteolytically excised during enzyme maturation.

The protein resides in the secreted. It carries out the reaction Release of a C-terminal amino acid with broad specificity.. May be involved in the degradation of small peptides (2-5 residues) or in the degradation of storage proteins in the embryo. This Hordeum vulgare (Barley) protein is Serine carboxypeptidase 1 (CBP1).